The chain runs to 410 residues: Lissencephaly-1 homolog (410 aa).

In terms of domain architecture, LisH spans 7 to 39; it reads QQEELQLAVHAYLVEAGHAEAAAAMAKSANLGD. Positions 55 to 80 form a coiled coil; that stretch reads TTITRLQKRNMELQAEVEELRSSARA. WD repeat units lie at residues 104 to 143, 146 to 185, 188 to 227, 230 to 269, 294 to 333, 336 to 375, and 378 to 410; these read GHRL…FERS, GHTN…CTKT, GHDH…CLQT, GHSD…CKHV, MIFG…HLAR, GHDN…VSKT, and AHNH…WECN.

This sequence belongs to the WD repeat LIS1/nudF family.

It localises to the cytoplasm. The protein resides in the cytoskeleton. The protein localises to the microtubule organizing center. Its subcellular location is the centrosome. Positively regulates the activity of the minus-end directed microtubule motor protein dynein. May enhance dynein-mediated microtubule sliding by targeting dynein to the microtubule plus end. Required for several dynein- and microtubule-dependent processes. This chain is Lissencephaly-1 homolog, found in Monosiga brevicollis (Choanoflagellate).